Consider the following 619-residue polypeptide: Enolase 4 (619 aa).

A compositionally biased stretch (basic and acidic residues) spans 173 to 184; that stretch reads DKERKELEKSQE. The interval 173 to 236 is disordered; the sequence is DKERKELEKS…PPEPPEPVLH (64 aa). A compositionally biased stretch (pro residues) spans 188–206; that stretch reads PAPPPVTLPPPPPPPPPPP. Position 302 (Glu-302) interacts with substrate. A disordered region spans residues 333–354; the sequence is TLPPPKQETKKGHNGSKRAQPP. Catalysis depends on Lys-497, which acts as the Proton acceptor. A substrate-binding site is contributed by Lys-548.

The protein belongs to the enolase family. As to quaternary structure, interacts with ENO1. Isoform 1 and isoform 4 interact with AKAP4. In terms of processing, synthesized as an approximately 70-kDa precursor, which then undergoes proteolytic cleavage to an approximately 60-kDa enzyme; HOATZ associates directly or indirectly with ENO4 to mediate this process before its transport to mature flagella. Testis-specific. Expressed in spermatids and ependyma (at protein level). In terms of tissue distribution, expressed at higher levels in late spermatids than in pachytene spermatocytes. As to expression, expressed at higher levels in pachytene spermatocytes than in late spermatids.

It carries out the reaction (2R)-2-phosphoglycerate = phosphoenolpyruvate + H2O. It functions in the pathway carbohydrate degradation; glycolysis; pyruvate from D-glyceraldehyde 3-phosphate: step 4/5. Its function is as follows. Required for sperm motility, function and male fertility. May be involved in the normal assembly of the sperm fibrous sheath and provides most of the enolase activity in sperm. In Mus musculus (Mouse), this protein is Enolase 4 (Eno4).